The following is an 875-amino-acid chain: Neurotrypsin (875 aa).

The first 20 residues, 1 to 20, serve as a signal peptide directing secretion; the sequence is MTLARFVLALMLGALPEVVG. The N-linked (GlcNAc...) asparagine glycan is linked to Asn-26. The disordered stretch occupies residues 29–88; the sequence is LHHSHRHSPPAGPHYPYYLPTQQRPPRTRPPPPLPRFPRPPRALPAQRPHALQAGHTPRP. Over residues 56–71 the composition is skewed to pro residues; it reads TRPPPPLPRFPRPPRA. In terms of domain architecture, Kringle spans 93–165; that stretch reads CPAGEPWVSV…GKVDWGYCDC (73 aa). 20 disulfide bridges follow: Cys-93/Cys-165, Cys-109/Cys-149, Cys-138/Cys-163, Cys-195/Cys-259, Cys-208/Cys-269, Cys-239/Cys-249, Cys-305/Cys-369, Cys-318/Cys-379, Cys-349/Cys-359, Cys-412/Cys-475, Cys-425/Cys-485, Cys-455/Cys-465, Cys-525/Cys-589, Cys-538/Cys-599, Cys-569/Cys-579, Cys-619/Cys-750, Cys-661/Cys-677, Cys-765/Cys-831, Cys-794/Cys-808, and Cys-821/Cys-850. 4 consecutive SRCR domains span residues 170–271, 280–381, 387–487, and 500–601; these read VRLR…TCSF, IRLA…SCTP, IRLA…ACYP, and VRLM…ICDY. Residues 619 to 630 are zymogen activation region; it reads CGLRLLHRRQKR. Residues 631–874 enclose the Peptidase S1 domain; the sequence is IIGGKNSLRG…FVPWIKSVTK (244 aa). His-676 serves as the catalytic Charge relay system. An N-linked (GlcNAc...) asparagine glycan is attached at Asn-683. Residue Asp-726 is the Charge relay system of the active site. The Charge relay system role is filled by Ser-825.

It belongs to the peptidase S1 family. In terms of tissue distribution, brain and Leydig cells of the testis.

It is found in the secreted. Functionally, plays a role in neuronal plasticity and the proteolytic action may subserve structural reorganizations associated with learning and memory operations. The polypeptide is Neurotrypsin (PRSS12) (Homo sapiens (Human)).